Consider the following 351-residue polypeptide: Histidine protein kinase SaeS (351 aa).

The next 2 helical transmembrane spans lie at 9 to 29 and 40 to 60; these read IIIG…IAYI and TLTL…SIFI. The HAMP domain occupies 61–114; that stretch reads NPLIQKIKQFNIKTKQFANGNYASNDKTFNSPKEIYELNQSFNKMASEITQQMN. Positions 129–348 constitute a Histidine kinase domain; that stretch reads NLAHDLKTPL…TMTVTLHKLD (220 aa). H132 is subject to Phosphohistidine; by autocatalysis.

Post-translationally, autophosphorylated.

It is found in the cell membrane. The enzyme catalyses ATP + protein L-histidine = ADP + protein N-phospho-L-histidine.. Functionally, member of the two-component regulatory system SaeR/SaeS involved in the regulation of staphylococcal virulence factors in a strain-dependent fashion. Probably functions as a membrane-associated protein kinase that upon sensing the appropriate signal, autophosphorylates and in turn activates the cytosolic response regulator SaeR. The polypeptide is Histidine protein kinase SaeS (saeS) (Staphylococcus aureus (strain USA300)).